A 430-amino-acid polypeptide reads, in one-letter code: MTSVVVVGTQWGDEGKGKITDFLSADAEVIARYQGGDNAGHTIVIDGKKFKLHLIPSGIFFPQKISVIGNGVVVNPKSLVKELAYLHDEGVTTDNLRISDRAHVILPYHIQLDQLQEDAKGDNKIGTTIKGIGPAYMDKAARVGIRIADLLDKDIFAERLRINLAEKNRLFEKMYDSTPLDFDAIFEEYYAYGQEIKQYVTDTSVILNDALDAGKRVLFEGAQGVMLDIDQGTYPFVTSSNPVAGGVTIGSGVGPNKINKVVGVCKAYTSRVGDGPFPTELFDEVGERIREVGHEYGTTTGRPRRVGWFDSVVMRHSRRVSGITNLSLNSIDVLSGLDTVKICVAYDLDGKRIDYYPANLEQLKRCKPIYEELPGWQEDITGVRSLDELPENARNYVRRVGELVGVRISTFSVGPGREQTNILESVWASI.

GTP-binding positions include 12 to 18 (GDEGKGK) and 40 to 42 (GHT). Asp-13 serves as the catalytic Proton acceptor. Residues Asp-13 and Gly-40 each contribute to the Mg(2+) site. Residues 13–16 (DEGK), 38–41 (NAGH), Thr-128, Arg-142, Gln-223, Thr-238, and Arg-302 contribute to the IMP site. His-41 (proton donor) is an active-site residue. Residue 298–304 (TTTGRPR) participates in substrate binding. Residues Arg-304, 330-332 (SID), and 412-414 (SVG) each bind GTP.

This sequence belongs to the adenylosuccinate synthetase family. In terms of assembly, homodimer. Mg(2+) serves as cofactor.

It localises to the cytoplasm. It carries out the reaction IMP + L-aspartate + GTP = N(6)-(1,2-dicarboxyethyl)-AMP + GDP + phosphate + 2 H(+). It functions in the pathway purine metabolism; AMP biosynthesis via de novo pathway; AMP from IMP: step 1/2. In terms of biological role, plays an important role in the de novo pathway of purine nucleotide biosynthesis. Catalyzes the first committed step in the biosynthesis of AMP from IMP. The polypeptide is Adenylosuccinate synthetase (Streptococcus pyogenes serotype M1).